A 176-amino-acid chain; its full sequence is ADP-ribosylation factor-like protein 8d (176 aa).

GTP contacts are provided by residues 21–26, 40–43, 62–66, and 121–124; these read NSGKTS, MIPT, DLGGQ, and NKID.

It belongs to the small GTPase superfamily. Arf family. Interacts with tubulin.

Its subcellular location is the late endosome membrane. The protein localises to the lysosome membrane. The protein resides in the cytoplasm. It localises to the cytoskeleton. It is found in the spindle. Functionally, may play a role in lysosome motility. May play a role in chromosome segregation. This Arabidopsis thaliana (Mouse-ear cress) protein is ADP-ribosylation factor-like protein 8d.